The primary structure comprises 215 residues: Nucleoside triphosphate pyrophosphatase (215 aa).

The Proton acceptor role is filled by aspartate 77.

This sequence belongs to the Maf family. Requires a divalent metal cation as cofactor.

The protein resides in the cytoplasm. The catalysed reaction is a ribonucleoside 5'-triphosphate + H2O = a ribonucleoside 5'-phosphate + diphosphate + H(+). It carries out the reaction a 2'-deoxyribonucleoside 5'-triphosphate + H2O = a 2'-deoxyribonucleoside 5'-phosphate + diphosphate + H(+). Its function is as follows. Nucleoside triphosphate pyrophosphatase. May have a dual role in cell division arrest and in preventing the incorporation of modified nucleotides into cellular nucleic acids. The protein is Nucleoside triphosphate pyrophosphatase of Rickettsia africae (strain ESF-5).